Here is a 257-residue protein sequence, read N- to C-terminus: Type III pantothenate kinase (257 aa).

6-13 (DVGNTNTV) is a binding site for ATP. Substrate-binding positions include Tyr-102 and 109-112 (GADR). Catalysis depends on Asp-111, which acts as the Proton acceptor. Asp-131 provides a ligand contact to K(+). Residue Thr-134 coordinates ATP. Position 186 (Thr-186) interacts with substrate.

Belongs to the type III pantothenate kinase family. In terms of assembly, homodimer. It depends on NH4(+) as a cofactor. K(+) is required as a cofactor.

It localises to the cytoplasm. It catalyses the reaction (R)-pantothenate + ATP = (R)-4'-phosphopantothenate + ADP + H(+). It participates in cofactor biosynthesis; coenzyme A biosynthesis; CoA from (R)-pantothenate: step 1/5. In terms of biological role, catalyzes the phosphorylation of pantothenate (Pan), the first step in CoA biosynthesis. This Leptospira borgpetersenii serovar Hardjo-bovis (strain JB197) protein is Type III pantothenate kinase.